Here is a 301-residue protein sequence, read N- to C-terminus: GTPase Era (301 aa).

Residues 6 to 173 (KSGFVAIVGR…LEQTNANLEI (168 aa)) enclose the Era-type G domain. Residues 14–21 (GRPNVGKS) are G1. 14-21 (GRPNVGKS) serves as a coordination point for GTP. The G2 stretch occupies residues 40–44 (QTTRN). The interval 61–64 (DTPG) is G3. Residues 61 to 65 (DTPGI) and 123 to 126 (NKID) each bind GTP. The tract at residues 123 to 126 (NKID) is G4. Positions 152-154 (ISA) are G5. A KH type-2 domain is found at 204–282 (TREEVPHSVA…FLEIWVKVQK (79 aa)).

This sequence belongs to the TRAFAC class TrmE-Era-EngA-EngB-Septin-like GTPase superfamily. Era GTPase family. Monomer.

It localises to the cytoplasm. It is found in the cell membrane. In terms of biological role, an essential GTPase that binds both GDP and GTP, with rapid nucleotide exchange. Plays a role in 16S rRNA processing and 30S ribosomal subunit biogenesis and possibly also in cell cycle regulation and energy metabolism. The polypeptide is GTPase Era (Listeria monocytogenes serotype 4b (strain F2365)).